Consider the following 775-residue polypeptide: Polyribonucleotide nucleotidyltransferase (775 aa).

Residues 223–247 (DEQVPEKPRKGRRRGRKSSPRKKTD) form a disordered region. Over residues 231-243 (RKGRRRGRKSSPR) the composition is skewed to basic residues. D567 and D573 together coordinate Mg(2+). Positions 633-692 (PRITTISVPVSKIGEVIGPKGKNINQITEDTGARVSIEDDGTVFISATSGGSAEAAVDRI) constitute a KH domain. The S1 motif domain maps to 704 to 773 (GERFLGTVVK…NRGKISLVPV (70 aa)).

The protein belongs to the polyribonucleotide nucleotidyltransferase family. The cofactor is Mg(2+).

It is found in the cytoplasm. It carries out the reaction RNA(n+1) + phosphate = RNA(n) + a ribonucleoside 5'-diphosphate. Its function is as follows. Involved in mRNA degradation. Catalyzes the phosphorolysis of single-stranded polyribonucleotides processively in the 3'- to 5'-direction. This chain is Polyribonucleotide nucleotidyltransferase, found in Corynebacterium kroppenstedtii (strain DSM 44385 / JCM 11950 / CIP 105744 / CCUG 35717).